A 215-amino-acid polypeptide reads, in one-letter code: Fibroblast growth factor 10 (215 aa).

An N-terminal signal peptide occupies residues 1 to 36 (MWKWILTHCASAFPHLPGCCCCFLLLFLVSSVPVTC). The tract at residues 49-73 (TNSSSSSSSSSSSSSFSSPSSAGRH) is disordered. Residue asparagine 50 is glycosylated (N-linked (GlcNAc...) asparagine). Residues 51-69 (SSSSSSSSSSSSSFSSPSS) are compositionally biased toward low complexity. Residue asparagine 203 is glycosylated (N-linked (GlcNAc...) asparagine).

Belongs to the heparin-binding growth factors family. Interacts with FGFR1 and FGFR2. Interacts with FGFBP1. In terms of tissue distribution, preferentially expressed in the lung in adults.

The protein localises to the secreted. Its function is as follows. Plays an important role in the regulation of embryonic development, cell proliferation and cell differentiation. Required for normal branching morphogenesis. May play a role in wound healing. This chain is Fibroblast growth factor 10 (Fgf10), found in Rattus norvegicus (Rat).